The chain runs to 205 residues: Coatomer subunit zeta-2 (205 aa).

Basic and acidic residues predominate over residues 1 to 12 (MQRPEAWPRPHP). The interval 1–33 (MQRPEAWPRPHPGEGASAAQAGGAAPPTRATEQ) is disordered. The segment covering 13-30 (GEGASAAQAGGAAPPTRA) has biased composition (low complexity).

The protein belongs to the adaptor complexes small subunit family. In terms of assembly, oligomeric complex.

It is found in the cytoplasm. It localises to the cytosol. Its subcellular location is the endoplasmic reticulum-Golgi intermediate compartment membrane. The protein resides in the golgi apparatus membrane. The protein localises to the cytoplasmic vesicle. It is found in the COPI-coated vesicle membrane. In terms of biological role, the coatomer is a cytosolic protein complex that binds to dilysine motifs and reversibly associates with Golgi non-clathrin-coated vesicles, which further mediate biosynthetic protein transport from the ER, via the Golgi up to the trans Golgi network. Coatomer complex is required for budding from Golgi membranes, and is essential for the retrograde Golgi-to-ER transport of dilysine-tagged proteins. The zeta subunit may be involved in regulating the coat assembly and, hence, the rate of biosynthetic protein transport due to its association-dissociation properties with the coatomer complex. This Mus musculus (Mouse) protein is Coatomer subunit zeta-2 (Copz2).